Consider the following 423-residue polypeptide: Mannose-6-phosphate isomerase (423 aa).

A2 is modified (N-acetylalanine). Residues S102 and S108 each carry the phosphoserine modification. Residues Q110, H112, E137, and H276 each contribute to the Zn(2+) site. Residue R295 is part of the active site.

The protein belongs to the mannose-6-phosphate isomerase type 1 family. The cofactor is Zn(2+).

The protein resides in the cytoplasm. The enzyme catalyses D-mannose 6-phosphate = D-fructose 6-phosphate. The protein operates within nucleotide-sugar biosynthesis; GDP-alpha-D-mannose biosynthesis; alpha-D-mannose 1-phosphate from D-fructose 6-phosphate: step 1/2. Its function is as follows. Isomerase that catalyzes the interconversion of fructose-6-P and mannose-6-P and has a critical role in the supply of D-mannose derivatives required for many eukaryotic glycosylation reactions. In Macaca fascicularis (Crab-eating macaque), this protein is Mannose-6-phosphate isomerase (MPI).